A 79-amino-acid polypeptide reads, in one-letter code: Large ribosomal subunit protein uL29 (79 aa).

This sequence belongs to the universal ribosomal protein uL29 family.

This chain is Large ribosomal subunit protein uL29, found in Nocardia farcinica (strain IFM 10152).